The following is a 105-amino-acid chain: Heat shock protein HspQ (105 aa).

The disordered stretch occupies residues 74-105 (SSELQDERPEQPSMDELAQTIRKQRQAPRLRN). The segment covering 95 to 105 (RKQRQAPRLRN) has biased composition (basic residues).

The protein belongs to the HspQ family.

It is found in the cytoplasm. Functionally, involved in the degradation of certain denaturated proteins, including DnaA, during heat shock stress. This chain is Heat shock protein HspQ, found in Shigella dysenteriae serotype 1 (strain Sd197).